A 331-amino-acid chain; its full sequence is MTIIVTGAAGFIGANLVKGLNDRGETDIIAVDNLTRADKFRNLVDCEISDYLDKTEFVERFARGDFGKVRAIFHEGACSDTMETDGRYMMENNYRYTLALMKACLDQGVQFLYASSAATYGASDTFREDREFEKPLNVYGYSKFLFDQIVRRTLPGALSQIVGFRYFNVYGPREQHKGRMASVAFHNFNQFRTEGTVKLFGEYNGYPQGGQMRDFVSVEDVVKVNLFFFDHPDKSGIFNLGTGRAQPFNDIATTVVNTLREAEGKPALSTEELAQEGLVEYVKFPDALRGKYQCFTQADQGKLRAAGYSAPFLTVQEGVARYCRWLMAQPA.

NADP(+) contacts are provided by residues 11-12 (FI), 32-33 (DN), Lys39, Lys54, 75-79 (EGACS), and Asn92. The active-site Proton acceptor is the Tyr139. Position 143 (Lys143) interacts with NADP(+). Residue Asn168 participates in substrate binding. NADP(+) is bound by residues Val169 and Lys177. Lys177 functions as the Proton acceptor in the catalytic mechanism. Residues Arg179, His186, 200–203 (FGEY), Arg213, and Tyr292 contribute to the substrate site.

It belongs to the NAD(P)-dependent epimerase/dehydratase family. HldD subfamily. As to quaternary structure, homopentamer. The cofactor is NADP(+).

The catalysed reaction is ADP-D-glycero-beta-D-manno-heptose = ADP-L-glycero-beta-D-manno-heptose. It participates in nucleotide-sugar biosynthesis; ADP-L-glycero-beta-D-manno-heptose biosynthesis; ADP-L-glycero-beta-D-manno-heptose from D-glycero-beta-D-manno-heptose 7-phosphate: step 4/4. In terms of biological role, catalyzes the interconversion between ADP-D-glycero-beta-D-manno-heptose and ADP-L-glycero-beta-D-manno-heptose via an epimerization at carbon 6 of the heptose. The chain is ADP-L-glycero-D-manno-heptose-6-epimerase from Ralstonia nicotianae (strain ATCC BAA-1114 / GMI1000) (Ralstonia solanacearum).